Consider the following 275-residue polypeptide: Dermonecrotic toxin LruSicTox-alphaIV1 (275 aa).

Residue H5 is part of the active site. Residues E25 and D27 each coordinate Mg(2+). Residue H41 is the Nucleophile of the active site. Cystine bridges form between C45–C51 and C47–C192. D85 is a binding site for Mg(2+).

It belongs to the arthropod phospholipase D family. Class II subfamily. Requires Mg(2+) as cofactor. As to expression, expressed by the venom gland.

Its subcellular location is the secreted. It catalyses the reaction an N-(acyl)-sphingosylphosphocholine = an N-(acyl)-sphingosyl-1,3-cyclic phosphate + choline. It carries out the reaction an N-(acyl)-sphingosylphosphoethanolamine = an N-(acyl)-sphingosyl-1,3-cyclic phosphate + ethanolamine. The catalysed reaction is a 1-acyl-sn-glycero-3-phosphocholine = a 1-acyl-sn-glycero-2,3-cyclic phosphate + choline. The enzyme catalyses a 1-acyl-sn-glycero-3-phosphoethanolamine = a 1-acyl-sn-glycero-2,3-cyclic phosphate + ethanolamine. Dermonecrotic toxins cleave the phosphodiester linkage between the phosphate and headgroup of certain phospholipids (sphingolipid and lysolipid substrates), forming an alcohol (often choline) and a cyclic phosphate. This toxin acts on sphingomyelin (SM). It may also act on ceramide phosphoethanolamine (CPE), lysophosphatidylcholine (LPC) and lysophosphatidylethanolamine (LPE), but not on lysophosphatidylserine (LPS), and lysophosphatidylglycerol (LPG). It acts by transphosphatidylation, releasing exclusively cyclic phosphate products as second products. Induces dermonecrosis, hemolysis, increased vascular permeability, edema, inflammatory response, and platelet aggregation. This chain is Dermonecrotic toxin LruSicTox-alphaIV1, found in Loxosceles rufescens (Mediterranean recluse spider).